Here is a 198-residue protein sequence, read N- to C-terminus: Holliday junction resolvase RecU (198 aa).

The disordered stretch occupies residues 1-21 (MVNYPHKLSSQKRQPSLSQPK). Residues 11–21 (QKRQPSLSQPK) show a composition bias toward polar residues. Mg(2+) is bound by residues T81, D83, E96, and Q115.

This sequence belongs to the RecU family. Mg(2+) serves as cofactor.

The protein localises to the cytoplasm. The enzyme catalyses Endonucleolytic cleavage at a junction such as a reciprocal single-stranded crossover between two homologous DNA duplexes (Holliday junction).. Its function is as follows. Endonuclease that resolves Holliday junction intermediates in genetic recombination. Cleaves mobile four-strand junctions by introducing symmetrical nicks in paired strands. Promotes annealing of linear ssDNA with homologous dsDNA. Required for DNA repair, homologous recombination and chromosome segregation. This Streptococcus pneumoniae (strain Taiwan19F-14) protein is Holliday junction resolvase RecU.